We begin with the raw amino-acid sequence, 386 residues long: 8-amino-7-oxononanoate synthase (386 aa).

Arg-23 contacts substrate. Residue 110-111 (GY) participates in pyridoxal 5'-phosphate binding. His-135 is a substrate binding site. Pyridoxal 5'-phosphate-binding residues include Ser-181, His-209, and Thr-236. Lys-239 carries the N6-(pyridoxal phosphate)lysine modification. Thr-354 is a substrate binding site.

This sequence belongs to the class-II pyridoxal-phosphate-dependent aminotransferase family. BioF subfamily. Homodimer. Requires pyridoxal 5'-phosphate as cofactor.

The enzyme catalyses 6-carboxyhexanoyl-[ACP] + L-alanine + H(+) = (8S)-8-amino-7-oxononanoate + holo-[ACP] + CO2. It participates in cofactor biosynthesis; biotin biosynthesis. Its function is as follows. Catalyzes the decarboxylative condensation of pimeloyl-[acyl-carrier protein] and L-alanine to produce 8-amino-7-oxononanoate (AON), [acyl-carrier protein], and carbon dioxide. The polypeptide is 8-amino-7-oxononanoate synthase (Thiobacillus denitrificans (strain ATCC 25259 / T1)).